Consider the following 393-residue polypeptide: 6-hydroxy-3-succinoylpyridine 3-monooxygenase HspB (393 aa).

Residues 6 to 35 and 277 to 287 each bind FAD; these read RVII…VLEA and MRNGRVILIGD.

Belongs to the PheA/TfdB FAD monooxygenase family. As to quaternary structure, homodimer. The cofactor is FAD.

It catalyses the reaction 4-(6-hydroxypyridin-3-yl)-4-oxobutanoate + 2 NADH + O2 + 2 H(+) = 2,5-dihydroxypyridine + succinate semialdehyde + 2 NAD(+) + H2O. It functions in the pathway alkaloid degradation; nicotine degradation. With respect to regulation, inhibited by Cu(2+) and Zn(2+). Involved in the nicotine degradation. Catalyzes the cleavage of 6-hydroxy-3-succinoylpyridine (HSP) by incorporation of oxygen at the 3-position to produce to 2,5-dihydroxypyridine (DHP) and succinic semialdehyde. The protein is 6-hydroxy-3-succinoylpyridine 3-monooxygenase HspB of Pseudomonas putida (strain DSM 28022 / S16).